The chain runs to 356 residues: Putative ankyrin repeat protein R599 (356 aa).

6 ANK repeats span residues 111–143 (NDDILLCTAIINCSSECLLYLLDKGIPIDFCDN), 152–182 (RLEKYIYTTRKNKSSCDMLKIVIDRGGNVNT), 183–213 (HNYEPLYSAVNDNNFDKIKLLVENGANKLSD), 215–238 (KRKITNTNLEIFQYLIDNRVELEV), 239–266 (NFDDIFLQSIINDDSECMKLFIELGANI), and 267–298 (NSIPTLELTKIIINARHEILEILINYGLDINN).

This Acanthamoeba polyphaga (Amoeba) protein is Putative ankyrin repeat protein R599.